Reading from the N-terminus, the 543-residue chain is MKQTKYIFVTGGVLSSLGKGIAAASIATLLKNSGLKVSILKADPYINVDPGTMSPFEHGEVFVTDDGAETDLDLGHYERFLDESLSQDNNFTTGRVYQSVIEKERRGEYLGKTIQVIPHIVGEIKDRIKKAGEGKDILIVEIGGTVGDIEGLPFLEAIRALRLEVGKNNAMNIHLTLVPFIKAAGELKTKPTQHSVGELRRIGISPDMIICRSEKALDRDLKDKIAISCGVEKNCVIESVDAASIYQIPLNFLKQDILSPIAEILDLKNLKPNMENWDSLVKRVIAPSNEVKIAFVGKYVDLKESYKSLTEAIIHAGAALDTKVELKWVDSEKLENMESAEVFKDVSGILVAGGFGYRGVEGKIKAIQYARENKIPFLGICLGMQLALVEFARNVLKLKDANSSEFDEKCQNPVVYLIDEFMDTNGEKQIRTAKTPLGGTMRLGAYKCDIKEKSLLAKVYNEAKSVKERHRHRYEANPKYRVDFEKHGLIVSGESKGLIEAVELNCHPFFLAVQFHPEFTSRLEHVNPVICGFIKAAINYEDN.

The segment at 1–267 (MKQTKYIFVT…LSPIAEILDL (267 aa)) is amidoligase domain. CTP is bound at residue serine 15. Serine 15 provides a ligand contact to UTP. Residues 16–21 (SLGKGI) and aspartate 73 contribute to the ATP site. Mg(2+)-binding residues include aspartate 73 and glutamate 141. CTP-binding positions include 148–150 (DIE), 188–193 (KTKPTQ), and lysine 224. UTP is bound by residues 188 to 193 (KTKPTQ) and lysine 224. One can recognise a Glutamine amidotransferase type-1 domain in the interval 292–543 (KIAFVGKYVD…IKAAINYEDN (252 aa)). An L-glutamine-binding site is contributed by glycine 354. Cysteine 381 (nucleophile; for glutamine hydrolysis) is an active-site residue. L-glutamine-binding positions include 382–385 (LGMQ), glutamate 405, and arginine 473. Active-site residues include histidine 516 and glutamate 518.

The protein belongs to the CTP synthase family. As to quaternary structure, homotetramer.

It carries out the reaction UTP + L-glutamine + ATP + H2O = CTP + L-glutamate + ADP + phosphate + 2 H(+). The catalysed reaction is L-glutamine + H2O = L-glutamate + NH4(+). It catalyses the reaction UTP + NH4(+) + ATP = CTP + ADP + phosphate + 2 H(+). It functions in the pathway pyrimidine metabolism; CTP biosynthesis via de novo pathway; CTP from UDP: step 2/2. Its activity is regulated as follows. Allosterically activated by GTP, when glutamine is the substrate; GTP has no effect on the reaction when ammonia is the substrate. The allosteric effector GTP functions by stabilizing the protein conformation that binds the tetrahedral intermediate(s) formed during glutamine hydrolysis. Inhibited by the product CTP, via allosteric rather than competitive inhibition. Functionally, catalyzes the ATP-dependent amination of UTP to CTP with either L-glutamine or ammonia as the source of nitrogen. Regulates intracellular CTP levels through interactions with the four ribonucleotide triphosphates. The chain is CTP synthase from Campylobacter jejuni subsp. jejuni serotype O:6 (strain 81116 / NCTC 11828).